A 147-amino-acid chain; its full sequence is uncharacterized protein (147 aa).

A run of 2 helical transmembrane segments spans residues 42-62 and 64-84; these read WASL…SPEP and LILQ…ATAF.

It localises to the cell membrane. This is an uncharacterized protein from Bacillus subtilis (strain 168).